We begin with the raw amino-acid sequence, 1164 residues long: MKQQWQFLILCLLVLFLTVDSRGRRLLSDDVNDTALLTAFKQTSIKSDPTNFLGNWRYGSGRDPCTWRGVSCSSDGRVIGLDLRNGGLTGTLNLNNLTALSNLRSLYLQGNNFSSGDSSSSSGCSLEVLDLSSNSLTDSSIVDYVFSTCLNLVSVNFSHNKLAGKLKSSPSASNKRITTVDLSNNRFSDEIPETFIADFPNSLKHLDLSGNNVTGDFSRLSFGLCENLTVFSLSQNSISGDRFPVSLSNCKLLETLNLSRNSLIGKIPGDDYWGNFQNLRQLSLAHNLYSGEIPPELSLLCRTLEVLDLSGNSLTGQLPQSFTSCGSLQSLNLGNNKLSGDFLSTVVSKLSRITNLYLPFNNISGSVPISLTNCSNLRVLDLSSNEFTGEVPSGFCSLQSSSVLEKLLIANNYLSGTVPVELGKCKSLKTIDLSFNALTGLIPKEIWTLPKLSDLVMWANNLTGGIPESICVDGGNLETLILNNNLLTGSLPESISKCTNMLWISLSSNLLTGEIPVGIGKLEKLAILQLGNNSLTGNIPSELGNCKNLIWLDLNSNNLTGNLPGELASQAGLVMPGSVSGKQFAFVRNEGGTDCRGAGGLVEFEGIRAERLEHFPMVHSCPKTRIYSGMTMYMFSSNGSMIYLDLSYNAVSGSIPLGYGAMGYLQVLNLGHNLLTGTIPDSFGGLKAIGVLDLSHNDLQGFLPGSLGGLSFLSDLDVSNNNLTGPIPFGGQLTTFPLTRYANNSGLCGVPLPPCSSGSRPTRSHAHPKKQSIATGMSAGIVFSFMCIVMLIMALYRARKVQKKEKQREKYIESLPTSGSSSWKLSSVHEPLSINVATFEKPLRKLTFAHLLEATNGFSADSMIGSGGFGDVYKAKLADGSVVAIKKLIQVTGQGDREFMAEMETIGKIKHRNLVPLLGYCKIGEERLLVYEYMKYGSLETVLHEKTKKGGIFLDWSARKKIAIGAARGLAFLHHSCIPHIIHRDMKSSNVLLDQDFVARVSDFGMARLVSALDTHLSVSTLAGTPGYVPPEYYQSFRCTAKGDVYSYGVILLELLSGKKPIDPEEFGEDNNLVGWAKQLYREKRGAEILDPELVTDKSGDVELLHYLKIASQCLDDRPFKRPTMIQVMTMFKELVQVDTENDSLDEFLLKETPLVEESRDKEP.

An N-terminal signal peptide occupies residues 1–23; that stretch reads MKQQWQFLILCLLVLFLTVDSRG. The Extracellular portion of the chain corresponds to 24-772; sequence RRLLSDDVND…RSHAHPKKQS (749 aa). N-linked (GlcNAc...) asparagine glycosylation occurs at Asn-32. Positions 65 to 72 match the Cys pair 1 motif; the sequence is CTWRGVSC. 20 LRR repeats span residues 77 to 98, 102 to 123, 125 to 146, 151 to 173, 176 to 197, 202 to 224, 227 to 248, 252 to 274, 278 to 300, 303 to 325, 327 to 347, 352 to 375, 376 to 397, 403 to 424, 427 to 448, 451 to 473, 476 to 498, 500 to 523, 524 to 546, and 548 to 570; these read RVIG…NNLT, NLRS…SSSG, SLEV…DYVF, NLVS…PSAS, RITT…TFIA, SLKH…SFGL, NLTV…VSLS, LLET…DYWG, NLRQ…LSLL, TLEV…FTSC, SLQS…STVV, RITN…TNCS, NLRV…GFCS, VLEK…ELGK, SLKT…EIWT, KLSD…ICVD, NLET…ISKC, NMLW…GKLE, KLAI…LGNC, and NLIW…LASQ. N-linked (GlcNAc...) asparagine glycosylation is found at Asn-96 and Asn-112. N-linked (GlcNAc...) asparagine glycosylation occurs at Asn-156. Residues Asn-212, Asn-227, and Asn-257 are each glycosylated (N-linked (GlcNAc...) asparagine). Residues Asn-362 and Asn-373 are each glycosylated (N-linked (GlcNAc...) asparagine). N-linked (GlcNAc...) asparagine glycosylation occurs at Asn-461. N-linked (GlcNAc...) asparagine glycans are attached at residues Asn-532, Asn-558, and Asn-638. LRR repeat units follow at residues 640–662, 664–686, 688–711, and 712–734; these read SMIY…YGAM, YLQV…FGGL, AIGV…GGLS, and FLSD…GQLT. Asn-722 and Asn-743 each carry an N-linked (GlcNAc...) asparagine glycan. Positions 748 to 755 match the Cys pair 2 motif; sequence CGVPLPPC. Residues 773–793 traverse the membrane as a helical segment; sequence IATGMSAGIVFSFMCIVMLIM. Over 794–1164 the chain is Cytoplasmic; that stretch reads ALYRARKVQK…LVEESRDKEP (371 aa). Phosphothreonine is present on residues Thr-847 and Thr-855. One can recognise a Protein kinase domain in the interval 858 to 1136; sequence FSADSMIGSG…QVMTMFKELV (279 aa). ATP contacts are provided by residues 864–872 and Lys-886; that span reads IGSGGFGDV. Residue Tyr-931 is modified to Phosphotyrosine. The Proton acceptor role is filled by Asp-985. Phosphoserine is present on Ser-1020. A Phosphotyrosine modification is found at Tyr-1028.

The protein belongs to the protein kinase superfamily. Ser/Thr protein kinase family. In terms of processing, autophosphorylated on Tyr and Thr residues. In terms of tissue distribution, predominantly expressed in vascular tissues. Expressed only during postembryonic development with a very discrete pattern of expression, preferentially in the two protophloem cell files at the elongation zone of the root. The expression in these two cell files attenuates as the phloem cells differentiate in the upper root. In cotyledons and leaves, it is expressed in phloem cells, starting at the cotyledons and shoot apex, moving toward the basal part of the leaves, where the expression is weak. Expressed in the secondary and tertiary veins and in the upper part of the cotyledons and leaves. Weakly or not expressed in the inflorescence stems. Has some complementary expression with BRL1.

The protein localises to the cell membrane. The enzyme catalyses L-seryl-[protein] + ATP = O-phospho-L-seryl-[protein] + ADP + H(+). It carries out the reaction L-threonyl-[protein] + ATP = O-phospho-L-threonyl-[protein] + ADP + H(+). It catalyses the reaction L-tyrosyl-[protein] + ATP = O-phospho-L-tyrosyl-[protein] + ADP + H(+). In terms of biological role, receptor with a dual specificity kinase activity acting on both serine/threonine- and tyrosine-containing substrates. Binds brassinolide. Regulates, in response to brassinosteroid binding, a signaling cascade involved in plant development. May be involved in cell growth and vascular differentiation. The polypeptide is Receptor-like protein kinase BRI1-like 3 (BRL3) (Arabidopsis thaliana (Mouse-ear cress)).